Reading from the N-terminus, the 697-residue chain is Glycine--tRNA ligase beta subunit (697 aa).

This sequence belongs to the class-II aminoacyl-tRNA synthetase family. As to quaternary structure, tetramer of two alpha and two beta subunits.

It localises to the cytoplasm. It catalyses the reaction tRNA(Gly) + glycine + ATP = glycyl-tRNA(Gly) + AMP + diphosphate. The sequence is that of Glycine--tRNA ligase beta subunit from Cereibacter sphaeroides (strain ATCC 17029 / ATH 2.4.9) (Rhodobacter sphaeroides).